A 133-amino-acid chain; its full sequence is Complexin-1 (133 aa).

2 disordered regions span residues 1–40 (MDFV…RLEA) and 85–112 (AMEA…DEEE). The segment covering 15–40 (DMGKMLGGDEEKDPDAEKKEEERLEA) has biased composition (basic and acidic residues). Positions 28-60 (PDAEKKEEERLEALRQAEEERAGKYAKMEAERE) form a coiled coil.

This sequence belongs to the complexin/synaphin family. In terms of assembly, binds to the SNARE core complex containing SNAP25, VAMP2 and syntaxin-1. In terms of tissue distribution, nervous system. Present in electric organ (at protein level).

The protein localises to the cytoplasm. Its subcellular location is the cytosol. Positively regulates a late step in synaptic vesicle exocytosis. The chain is Complexin-1 from Narke japonica (Japanese sleeper ray).